The following is a 198-amino-acid chain: GTP cyclohydrolase-2 (198 aa).

Residue 52-56 (RMHSE) participates in GTP binding. Residues cysteine 57, cysteine 68, and cysteine 70 each contribute to the Zn(2+) site. GTP is bound by residues glutamine 73, 94–96 (EGR), and threonine 116. Aspartate 128 acts as the Proton acceptor in catalysis. Arginine 130 functions as the Nucleophile in the catalytic mechanism. Positions 151 and 156 each coordinate GTP.

Belongs to the GTP cyclohydrolase II family. Requires Zn(2+) as cofactor.

The catalysed reaction is GTP + 4 H2O = 2,5-diamino-6-hydroxy-4-(5-phosphoribosylamino)-pyrimidine + formate + 2 phosphate + 3 H(+). It participates in cofactor biosynthesis; riboflavin biosynthesis; 5-amino-6-(D-ribitylamino)uracil from GTP: step 1/4. In terms of biological role, catalyzes the conversion of GTP to 2,5-diamino-6-ribosylamino-4(3H)-pyrimidinone 5'-phosphate (DARP), formate and pyrophosphate. The sequence is that of GTP cyclohydrolase-2 from Vibrio cholerae serotype O1 (strain ATCC 39315 / El Tor Inaba N16961).